The primary structure comprises 622 residues: Polypeptide N-acetylgalactosaminyltransferase 18 (622 aa).

Over 1-12 (MVCTRKTKTLVS) the chain is Cytoplasmic. A helical; Signal-anchor for type II membrane protein membrane pass occupies residues 13–35 (TCVILSGMTNIICLLYVGWVTNY). Residues 36 to 622 (IASVYVRGQE…ITNVLRSLVS (587 aa)) are Lumenal-facing. 5 disulfide bridges follow: Cys144-Cys392, Cys383-Cys462, Cys497-Cys513, Cys545-Cys558, and Cys586-Cys606. A glycan (N-linked (GlcNAc...) asparagine) is linked at Asn146. Residues 153 to 267 (LPEVSIVFIF…VGWAEPVLTR (115 aa)) form a catalytic subdomain A region. Asp194 serves as a coordination point for substrate. Residue Asn195 is glycosylated (N-linked (GlcNAc...) asparagine). Positions 251 and 253 each coordinate Mn(2+). A glycan (N-linked (GlcNAc...) asparagine) is linked at Asn320. Positions 324 to 400 (PIRSPALIGC…PCSRIAHIER (77 aa)) are catalytic subdomain B. His397 provides a ligand contact to Mn(2+). Arg400 and Tyr405 together coordinate substrate. Residues 484-614 (AYGVLQNSLK…KCSGQHWTIT (131 aa)) form the Ricin B-type lectin domain.

This sequence belongs to the glycosyltransferase 2 family. GalNAc-T subfamily. It depends on Mn(2+) as a cofactor.

It is found in the golgi apparatus membrane. It catalyses the reaction L-seryl-[protein] + UDP-N-acetyl-alpha-D-galactosamine = a 3-O-[N-acetyl-alpha-D-galactosaminyl]-L-seryl-[protein] + UDP + H(+). The enzyme catalyses L-threonyl-[protein] + UDP-N-acetyl-alpha-D-galactosamine = a 3-O-[N-acetyl-alpha-D-galactosaminyl]-L-threonyl-[protein] + UDP + H(+). The protein operates within protein modification; protein glycosylation. Functionally, catalyzes the initial reaction in O-linked oligosaccharide biosynthesis, the transfer of an N-acetyl-D-galactosamine (GalNAc) residue from UDP-GalNAc to a serine or threonine residue on the protein receptor. In Mus musculus (Mouse), this protein is Polypeptide N-acetylgalactosaminyltransferase 18 (Galnt18).